The primary structure comprises 117 residues: Large ribosomal subunit protein bL19 (117 aa).

The protein belongs to the bacterial ribosomal protein bL19 family.

In terms of biological role, this protein is located at the 30S-50S ribosomal subunit interface and may play a role in the structure and function of the aminoacyl-tRNA binding site. This Shewanella pealeana (strain ATCC 700345 / ANG-SQ1) protein is Large ribosomal subunit protein bL19.